The primary structure comprises 216 residues: Peptide methionine sulfoxide reductase MsrA (216 aa).

The active site involves Cys54.

This sequence belongs to the MsrA Met sulfoxide reductase family.

It carries out the reaction L-methionyl-[protein] + [thioredoxin]-disulfide + H2O = L-methionyl-(S)-S-oxide-[protein] + [thioredoxin]-dithiol. The enzyme catalyses [thioredoxin]-disulfide + L-methionine + H2O = L-methionine (S)-S-oxide + [thioredoxin]-dithiol. Has an important function as a repair enzyme for proteins that have been inactivated by oxidation. Catalyzes the reversible oxidation-reduction of methionine sulfoxide in proteins to methionine. The protein is Peptide methionine sulfoxide reductase MsrA of Xylella fastidiosa (strain M12).